The sequence spans 362 residues: [LysW]-lysine hydrolase (362 aa).

His-69 contacts Zn(2+). Asp-71 is an active-site residue. A Zn(2+)-binding site is contributed by Asp-94. Glu-127 functions as the Proton acceptor in the catalytic mechanism. Residues Glu-128, Glu-151, and His-334 each contribute to the Zn(2+) site.

Belongs to the peptidase M20A family. LysK subfamily. The cofactor is Zn(2+). Requires Co(2+) as cofactor.

Its subcellular location is the cytoplasm. It carries out the reaction [amino-group carrier protein]-C-terminal-gamma-(L-lysyl)-L-glutamate + H2O = [amino-group carrier protein]-C-terminal-L-glutamate + L-lysine. The protein operates within amino-acid biosynthesis; L-lysine biosynthesis via AAA pathway; L-lysine from L-alpha-aminoadipate (Thermus route): step 5/5. Catalyzes the release of L-lysine from [LysW]-gamma-L-lysine. The protein is [LysW]-lysine hydrolase of Deinococcus radiodurans (strain ATCC 13939 / DSM 20539 / JCM 16871 / CCUG 27074 / LMG 4051 / NBRC 15346 / NCIMB 9279 / VKM B-1422 / R1).